The chain runs to 394 residues: Flavin-dependent monooxygenase, oxygenase subunit HsaA (394 aa).

Residues Trp-84, 118 to 120 (SSY), 141 to 143 (WSS), Arg-263, 346 to 347 (AT), and 368 to 369 (HA) contribute to the FMN site.

The protein belongs to the HpaH/HsaA monooxygenase family. As to quaternary structure, homotetramer under anaerobic conditions. HsaAB monooxygenase consists of an oxygenase component HsaA and a reductase component HsaB.

It catalyses the reaction 3-hydroxy-9,10-secoandrosta-1,3,5(10)-triene-9,17-dione + FMNH2 + O2 = 3,4-dihydroxy-9,10-secoandrosta-1,3,5(10)-triene-9,17-dione + FMN + H2O + H(+). It functions in the pathway lipid metabolism; steroid biosynthesis. Its function is as follows. Catalyzes the o-hydroxylation of 3-hydroxy-9,10-secoandrosta-1,3,5(10)-triene-9,17-dione (3-HSA) to 3,4-dihydroxy-9,10-secoandrosta-1,3,5(10)-triene-9,17-dione (3,4-DHSA) in the catabolism of cholesterol. This Mycobacterium tuberculosis (strain CDC 1551 / Oshkosh) protein is Flavin-dependent monooxygenase, oxygenase subunit HsaA.